A 192-amino-acid chain; its full sequence is Probable nicotinate-nucleotide adenylyltransferase (192 aa).

It belongs to the NadD family.

It catalyses the reaction nicotinate beta-D-ribonucleotide + ATP + H(+) = deamido-NAD(+) + diphosphate. It functions in the pathway cofactor biosynthesis; NAD(+) biosynthesis; deamido-NAD(+) from nicotinate D-ribonucleotide: step 1/1. Its function is as follows. Catalyzes the reversible adenylation of nicotinate mononucleotide (NaMN) to nicotinic acid adenine dinucleotide (NaAD). The polypeptide is Probable nicotinate-nucleotide adenylyltransferase (Rhizobium etli (strain ATCC 51251 / DSM 11541 / JCM 21823 / NBRC 15573 / CFN 42)).